The chain runs to 255 residues: uncharacterized protein (255 aa).

A divalent metal cation contacts are provided by H6, H8, E92, H128, H153, and D203.

The protein belongs to the metallo-dependent hydrolases superfamily. TatD-type hydrolase family. The cofactor is a divalent metal cation.

This is an uncharacterized protein from Bacillus subtilis (strain 168).